A 233-amino-acid polypeptide reads, in one-letter code: 5'-methylthioadenosine/S-adenosylhomocysteine nucleosidase (233 aa).

Catalysis depends on glutamate 12, which acts as the Proton acceptor. Residues glycine 78, isoleucine 152, and methionine 173–glutamate 174 contribute to the substrate site. Aspartate 197 functions as the Proton donor in the catalytic mechanism.

Belongs to the PNP/UDP phosphorylase family. MtnN subfamily. As to quaternary structure, homodimer.

The enzyme catalyses S-adenosyl-L-homocysteine + H2O = S-(5-deoxy-D-ribos-5-yl)-L-homocysteine + adenine. The catalysed reaction is S-methyl-5'-thioadenosine + H2O = 5-(methylsulfanyl)-D-ribose + adenine. It catalyses the reaction 5'-deoxyadenosine + H2O = 5-deoxy-D-ribose + adenine. It functions in the pathway amino-acid biosynthesis; L-methionine biosynthesis via salvage pathway; S-methyl-5-thio-alpha-D-ribose 1-phosphate from S-methyl-5'-thioadenosine (hydrolase route): step 1/2. Catalyzes the irreversible cleavage of the glycosidic bond in both 5'-methylthioadenosine (MTA) and S-adenosylhomocysteine (SAH/AdoHcy) to adenine and the corresponding thioribose, 5'-methylthioribose and S-ribosylhomocysteine, respectively. Also cleaves 5'-deoxyadenosine, a toxic by-product of radical S-adenosylmethionine (SAM) enzymes, into 5-deoxyribose and adenine. Thus, is required for in vivo function of the radical SAM enzymes biotin synthase and lipoic acid synthase, that are inhibited by 5'-deoxyadenosine accumulation. The chain is 5'-methylthioadenosine/S-adenosylhomocysteine nucleosidase from Yersinia enterocolitica serotype O:8 / biotype 1B (strain NCTC 13174 / 8081).